We begin with the raw amino-acid sequence, 380 residues long: Homoserine O-acetyltransferase (380 aa).

The AB hydrolase-1 domain maps to 70–366; that stretch reads NAVLVFHALT…SPHGHDAFLI (297 aa). The active-site Nucleophile is the serine 186. Arginine 250 provides a ligand contact to substrate. Residues aspartate 333 and histidine 361 contribute to the active site. Aspartate 362 is a binding site for substrate.

Belongs to the AB hydrolase superfamily. MetX family. Homodimer.

It localises to the cytoplasm. It catalyses the reaction L-homoserine + acetyl-CoA = O-acetyl-L-homoserine + CoA. The protein operates within amino-acid biosynthesis; L-methionine biosynthesis via de novo pathway; O-acetyl-L-homoserine from L-homoserine: step 1/1. Its function is as follows. Transfers an acetyl group from acetyl-CoA to L-homoserine, forming acetyl-L-homoserine. The polypeptide is Homoserine O-acetyltransferase (Thermus thermophilus (strain ATCC 27634 / DSM 579 / HB8)).